Reading from the N-terminus, the 341-residue chain is Glucokinase (341 aa).

18–23 (GDIGGT) provides a ligand contact to ATP.

It belongs to the bacterial glucokinase family.

The protein resides in the cytoplasm. It catalyses the reaction D-glucose + ATP = D-glucose 6-phosphate + ADP + H(+). This is Glucokinase from Rhizobium etli (strain ATCC 51251 / DSM 11541 / JCM 21823 / NBRC 15573 / CFN 42).